The chain runs to 522 residues: Signal transduction histidine-protein kinase/phosphatase MprB (522 aa).

At 1–30 (MIRLHRPQRPPLRAPLRATPSLSLRWRVML) the chain is on the cytoplasmic side. Residues 31–51 (LAMSMVAMVVVLMAFAVYAVI) form a helical membrane-spanning segment. Topologically, residues 52–167 (SAALYSDIDN…PTEAVMNKLR (116 aa)) are extracellular. A helical membrane pass occupies residues 168–188 (WVLLIVGGVGVAVAAVAGGMV). Topologically, residues 189–522 (TRAGLRPVAR…SVDSQSARAR (334 aa)) are cytoplasmic. One can recognise an HAMP domain in the interval 190–242 (RAGLRPVARLTEAAERVARTDDLRPIPVFGSDELARLTESFNLMLRALAESRE). The Histidine kinase domain maps to 250–470 (DAGHELRTPL…SFYVLLPGRP (221 aa)). Position 253 is a phosphohistidine; by autocatalysis (His253). Positions 468–522 (GRPLPPAGHSTPAGESETDKAEAATDPAVPVAGDTANSRESANVISVDSQSARAR) are disordered. Residues 502 to 522 (TANSRESANVISVDSQSARAR) show a composition bias toward polar residues.

Mg(2+) serves as cofactor. The cofactor is Mn(2+). Autophosphorylated.

It is found in the cell membrane. The catalysed reaction is ATP + protein L-histidine = ADP + protein N-phospho-L-histidine.. In terms of biological role, member of the two-component regulatory system MprB/MprA which contributes to maintaining a balance among several systems involved in stress resistance and is required for establishment and maintenance of persistent infection in the host. In response to environmental signals MprB acts both as a membrane-associated protein kinase that undergoes autophosphorylation and subsequently transfers the phosphate to MprA, and a protein phosphatase that dephosphorylates phospho-MprA. The sequence is that of Signal transduction histidine-protein kinase/phosphatase MprB (mprB) from Mycobacterium avium (strain 104).